A 376-amino-acid chain; its full sequence is MEPQILFLYLSLFILSLNFFFTNLKPRLVRLFQPSLESRVKTALLSRKEVAAFLDSPIVEDEEGEEREEEEEGGIVSNANFTFEFDPYMMSKAESVNKALEEAIPVGEPLKIHEAMRYAILAAGKRVRPILCLASCELVGGQENAAMPAACAVEMIHTMSLIKDDLPCMDNDDLRRGKPTTHKVYGEGVAILSGGALLSLAFEHMTTAEISSERMVWAVRELARSIGTRGLVAGQAMDISSEGLDLNEVGLEHLEFIHVHKTAVLLETAAVLGAIIGGGSDEEIESVRKFARCIGLLFQVVDDILDETKSSEELGKTAGKDQLAGKLTYPKLIGLEKSKEFVKRLTKDARQHLQGFSSEKVAPLVALTTFIANRNK.

Residues Met-1–Leu-24 form the signal peptide. Isopentenyl diphosphate-binding residues include Lys-125, Arg-128, and His-157. Mg(2+)-binding residues include Asp-164 and Asp-170. Arg-175 contributes to the dimethylallyl diphosphate binding site. Arg-176 is a binding site for isopentenyl diphosphate. Positions 261, 262, 299, 316, and 326 each coordinate dimethylallyl diphosphate.

The protein belongs to the FPP/GGPP synthase family. Monomer. Part of a heterodimeric geranyl(geranyl)diphosphate synthase. Interacts with GGR. The cofactor is Mg(2+). In terms of tissue distribution, mainly expressed in flowers.

It localises to the endoplasmic reticulum. The catalysed reaction is isopentenyl diphosphate + dimethylallyl diphosphate = (2E)-geranyl diphosphate + diphosphate. It catalyses the reaction isopentenyl diphosphate + (2E)-geranyl diphosphate = (2E,6E)-farnesyl diphosphate + diphosphate. It carries out the reaction isopentenyl diphosphate + (2E,6E)-farnesyl diphosphate = (2E,6E,10E)-geranylgeranyl diphosphate + diphosphate. It participates in isoprenoid biosynthesis; farnesyl diphosphate biosynthesis; farnesyl diphosphate from geranyl diphosphate and isopentenyl diphosphate: step 1/1. It functions in the pathway isoprenoid biosynthesis; geranyl diphosphate biosynthesis; geranyl diphosphate from dimethylallyl diphosphate and isopentenyl diphosphate: step 1/1. The protein operates within isoprenoid biosynthesis; geranylgeranyl diphosphate biosynthesis; geranylgeranyl diphosphate from farnesyl diphosphate and isopentenyl diphosphate: step 1/1. Its function is as follows. Heterodimeric geranyl(geranyl)-diphosphate (GPP) synthase large subunit. In vitro, the large subunit catalyzes mainly the trans-addition of the three molecules of IPP onto DMAPP to form geranylgeranyl pyrophosphate while the small subunit alone is inactive. Upon association of the two subunits, the product profile is not changed. This is Heterodimeric geranylgeranyl pyrophosphate synthase large subunit 2 (GGPPS2) from Arabidopsis thaliana (Mouse-ear cress).